The primary structure comprises 173 residues: Large ribosomal subunit protein uL10 (173 aa).

It belongs to the universal ribosomal protein uL10 family. Part of the ribosomal stalk of the 50S ribosomal subunit. The N-terminus interacts with L11 and the large rRNA to form the base of the stalk. The C-terminus forms an elongated spine to which L12 dimers bind in a sequential fashion forming a multimeric L10(L12)X complex.

Forms part of the ribosomal stalk, playing a central role in the interaction of the ribosome with GTP-bound translation factors. This is Large ribosomal subunit protein uL10 from Micrococcus luteus (strain ATCC 4698 / DSM 20030 / JCM 1464 / CCM 169 / CCUG 5858 / IAM 1056 / NBRC 3333 / NCIMB 9278 / NCTC 2665 / VKM Ac-2230) (Micrococcus lysodeikticus).